The sequence spans 204 residues: Capsid protein (204 aa).

Disordered stretches follow at residues 112–132 and 185–204; these read PANP…TKAN and AAAS…RPNP. Residues 117 to 132 are compositionally biased toward low complexity; the sequence is TTVTTNQGSTTTTKAN. A compositionally biased stretch (pro residues) spans 191–204; it reads APPPASGGPIRPNP.

The protein belongs to the virgaviridae capsid protein family. In terms of assembly, interacts with the 40 kDa protein; this interaction may play a role in vector transmission of the virus.

Its subcellular location is the virion. Functionally, capsid protein self-assembles to form rod-shaped virions about 22 nm in diameter with a central canal enclosing the viral genomic RNA. In Bidens pilosa (Hairy beggarticks), this protein is Capsid protein (CP).